A 644-amino-acid polypeptide reads, in one-letter code: CTP synthase (644 aa).

Positions 300-551 (SIAIVGKYTK…LGLILASVDR (252 aa)) constitute a Glutamine amidotransferase type-1 domain. Active-site for GATase activity residues include Cys-399, His-527, and Glu-529.

This sequence belongs to the CTP synthase family.

It catalyses the reaction UTP + L-glutamine + ATP + H2O = CTP + L-glutamate + ADP + phosphate + 2 H(+). It functions in the pathway pyrimidine metabolism; CTP biosynthesis via de novo pathway; CTP from UDP: step 2/2. Catalyzes the ATP-dependent amination of UTP to CTP with either L-glutamine or ammonia as the source of nitrogen. Constitutes the rate-limiting enzyme in the synthesis of cytosine nucleotides. The chain is CTP synthase from Drosophila pseudoobscura pseudoobscura (Fruit fly).